The primary structure comprises 217 residues: Peptide methionine sulfoxide reductase MsrA (217 aa).

C56 is a catalytic residue.

Belongs to the MsrA Met sulfoxide reductase family.

It carries out the reaction L-methionyl-[protein] + [thioredoxin]-disulfide + H2O = L-methionyl-(S)-S-oxide-[protein] + [thioredoxin]-dithiol. It catalyses the reaction [thioredoxin]-disulfide + L-methionine + H2O = L-methionine (S)-S-oxide + [thioredoxin]-dithiol. Has an important function as a repair enzyme for proteins that have been inactivated by oxidation. Catalyzes the reversible oxidation-reduction of methionine sulfoxide in proteins to methionine. The chain is Peptide methionine sulfoxide reductase MsrA from Corynebacterium melassecola.